A 359-amino-acid polypeptide reads, in one-letter code: DNA polymerase IV (359 aa).

Residues Ile-7–Gly-188 enclose the UmuC domain. 2 residues coordinate Mg(2+): Asp-11 and Asp-106. The active site involves Glu-107.

It belongs to the DNA polymerase type-Y family. As to quaternary structure, monomer. The cofactor is Mg(2+).

The protein resides in the cytoplasm. It catalyses the reaction DNA(n) + a 2'-deoxyribonucleoside 5'-triphosphate = DNA(n+1) + diphosphate. In terms of biological role, poorly processive, error-prone DNA polymerase involved in untargeted mutagenesis. Copies undamaged DNA at stalled replication forks, which arise in vivo from mismatched or misaligned primer ends. These misaligned primers can be extended by PolIV. Exhibits no 3'-5' exonuclease (proofreading) activity. May be involved in translesional synthesis, in conjunction with the beta clamp from PolIII. The polypeptide is DNA polymerase IV (Clostridium perfringens (strain 13 / Type A)).